Consider the following 306-residue polypeptide: Ribosomal RNA small subunit methyltransferase H (306 aa).

Residues 33 to 35, aspartate 51, phenylalanine 78, aspartate 96, and glutamine 103 contribute to the S-adenosyl-L-methionine site; that span reads GGY.

It belongs to the methyltransferase superfamily. RsmH family.

The protein localises to the cytoplasm. The enzyme catalyses cytidine(1402) in 16S rRNA + S-adenosyl-L-methionine = N(4)-methylcytidine(1402) in 16S rRNA + S-adenosyl-L-homocysteine + H(+). Specifically methylates the N4 position of cytidine in position 1402 (C1402) of 16S rRNA. This Rickettsia prowazekii (strain Madrid E) protein is Ribosomal RNA small subunit methyltransferase H.